We begin with the raw amino-acid sequence, 195 residues long: ATP-dependent Clp protease proteolytic subunit (195 aa).

Catalysis depends on Ser99, which acts as the Nucleophile. The active site involves His124.

The protein belongs to the peptidase S14 family. As to quaternary structure, fourteen ClpP subunits assemble into 2 heptameric rings which stack back to back to give a disk-like structure with a central cavity, resembling the structure of eukaryotic proteasomes.

It is found in the cytoplasm. The catalysed reaction is Hydrolysis of proteins to small peptides in the presence of ATP and magnesium. alpha-casein is the usual test substrate. In the absence of ATP, only oligopeptides shorter than five residues are hydrolyzed (such as succinyl-Leu-Tyr-|-NHMec, and Leu-Tyr-Leu-|-Tyr-Trp, in which cleavage of the -Tyr-|-Leu- and -Tyr-|-Trp bonds also occurs).. Its function is as follows. Cleaves peptides in various proteins in a process that requires ATP hydrolysis. Has a chymotrypsin-like activity. Plays a major role in the degradation of misfolded proteins. This is ATP-dependent Clp protease proteolytic subunit from Carboxydothermus hydrogenoformans (strain ATCC BAA-161 / DSM 6008 / Z-2901).